Here is a 260-residue protein sequence, read N- to C-terminus: HTH-type transcriptional activator FapR (260 aa).

In terms of domain architecture, HTH araC/xylS-type spans 154-251 (ERIVTLLFSD…GVTPKKFEIG (98 aa)). DNA-binding regions (H-T-H motif) lie at residues 171-192 (SDIA…EQEC) and 218-241 (IGMI…KEYY).

As to quaternary structure, homodimer.

Its function is as follows. Positive regulator of the expression of the 987P operon for the fimbrial protein in enterotoxigenic E.coli. This is HTH-type transcriptional activator FapR from Escherichia coli.